Consider the following 392-residue polypeptide: V-type proton ATPase subunit C (392 aa).

Residue alanine 2 is modified to N-acetylalanine.

The protein belongs to the V-ATPase C subunit family. V-ATPase is a heteromultimeric enzyme composed of a peripheral catalytic V1 complex (components A to H) attached to an integral membrane V0 proton pore complex (components: a, c, c', c'', d, e, f and VOA1). Interacts directly with VMA4.

The protein localises to the vacuole membrane. Its function is as follows. Subunit of the V1 complex of vacuolar(H+)-ATPase (V-ATPase), a multisubunit enzyme composed of a peripheral complex (V1) that hydrolyzes ATP and a membrane integral complex (V0) that translocates protons. V-ATPase is responsible for acidifying and maintaining the pH of intracellular compartments. Subunit C is necessary for the assembly of the catalytic sector of the enzyme and is likely to have a specific function in its catalytic activity. Reversibly leaves the enzyme after glucose depletion, causing the catalytic subcomplex V1 to detach from the V0 section. In Saccharomyces cerevisiae (strain ATCC 204508 / S288c) (Baker's yeast), this protein is V-type proton ATPase subunit C.